Here is a 119-residue protein sequence, read N- to C-terminus: Beta-2-microglobulin (119 aa).

The signal sequence occupies residues 1 to 20; the sequence is MACSVVVALLALLSLSGLEA. Residues 25–114 enclose the Ig-like C1-type domain; the sequence is PKIQVYSRHP…VTFSTPKTVK (90 aa). An intrachain disulfide couples Cys45 to Cys100.

It belongs to the beta-2-microglobulin family. In terms of assembly, heterodimer of an alpha chain and a beta chain. Beta-2-microglobulin is the beta-chain of major histocompatibility complex class I molecules.

It localises to the secreted. Functionally, component of the class I major histocompatibility complex (MHC). Involved in the presentation of peptide antigens to the immune system. This chain is Beta-2-microglobulin (B2M), found in Mico emiliae (Emilia's marmoset).